The following is a 249-amino-acid chain: tRNA pseudouridine synthase A (249 aa).

Asp-54 serves as the catalytic Nucleophile. Residue Tyr-112 coordinates substrate.

It belongs to the tRNA pseudouridine synthase TruA family. As to quaternary structure, homodimer.

It carries out the reaction uridine(38/39/40) in tRNA = pseudouridine(38/39/40) in tRNA. In terms of biological role, formation of pseudouridine at positions 38, 39 and 40 in the anticodon stem and loop of transfer RNAs. The protein is tRNA pseudouridine synthase A of Latilactobacillus sakei subsp. sakei (strain 23K) (Lactobacillus sakei subsp. sakei).